The following is a 430-amino-acid chain: Crotonyl-CoA carboxylase/reductase (430 aa).

Belongs to the zinc-containing alcohol dehydrogenase family. Crotonyl-CoA carboxylase/reductase subfamily. In terms of assembly, homodimer. Despite some sequence similarity to zinc-containing alcohol dehydrogenases, this enzyme does not bind any metals. is required as a cofactor.

The catalysed reaction is (2S)-ethylmalonyl-CoA + NADP(+) = (2E)-butenoyl-CoA + CO2 + NADPH. The enzyme catalyses (S)-methylmalonyl-CoA + NADP(+) = acryloyl-CoA + CO2 + NADPH. It carries out the reaction butanoyl-CoA + NADP(+) = (2E)-butenoyl-CoA + NADPH + H(+). In terms of biological role, catalyzes the NADPH-dependent reductive carboxylation of crotonyl-CoA ((2E)-butenoyl-CoA) to (2S)-ethylmalonyl-CoA, in the presence of CO2. This is a key reaction in the ethylmalonyl-CoA pathway for acetyl-CoA assimilation required for R.sphaeroides growth on acetate as sole carbon source. Is also able to accept acryloyl-CoA as an alternative substrate, yielding (2S)-methylmalonyl-CoA. To a lesser extent, when CO2 is absent, the enzyme also catalyzes the reduction of crotonyl-CoA to butanoyl-CoA. The protein is Crotonyl-CoA carboxylase/reductase of Cereibacter sphaeroides (strain ATCC 17023 / DSM 158 / JCM 6121 / CCUG 31486 / LMG 2827 / NBRC 12203 / NCIMB 8253 / ATH 2.4.1.) (Rhodobacter sphaeroides).